Consider the following 303-residue polypeptide: N-acetylmuramic acid 6-phosphate etherase (303 aa).

Residues 60 to 223 (ATASLQAGGR…STGVMVKLGK (164 aa)) form the SIS domain. The active-site Proton donor is the E88. Residue E119 is part of the active site.

This sequence belongs to the GCKR-like family. MurNAc-6-P etherase subfamily. Homodimer.

The catalysed reaction is N-acetyl-D-muramate 6-phosphate + H2O = N-acetyl-D-glucosamine 6-phosphate + (R)-lactate. The protein operates within amino-sugar metabolism; 1,6-anhydro-N-acetylmuramate degradation. It functions in the pathway amino-sugar metabolism; N-acetylmuramate degradation. It participates in cell wall biogenesis; peptidoglycan recycling. In terms of biological role, specifically catalyzes the cleavage of the D-lactyl ether substituent of MurNAc 6-phosphate, producing GlcNAc 6-phosphate and D-lactate. Together with AnmK, is also required for the utilization of anhydro-N-acetylmuramic acid (anhMurNAc) either imported from the medium or derived from its own cell wall murein, and thus plays a role in cell wall recycling. This chain is N-acetylmuramic acid 6-phosphate etherase, found in Pectobacterium atrosepticum (strain SCRI 1043 / ATCC BAA-672) (Erwinia carotovora subsp. atroseptica).